Reading from the N-terminus, the 585-residue chain is A-type ATP synthase subunit A (585 aa).

An ATP-binding site is contributed by 231–238; sequence GPFGSGKT.

It belongs to the ATPase alpha/beta chains family. In terms of assembly, has multiple subunits with at least A(3), B(3), C, D, E, F, H, I and proteolipid K(x).

Its subcellular location is the cell membrane. The enzyme catalyses ATP + H2O + 4 H(+)(in) = ADP + phosphate + 5 H(+)(out). Component of the A-type ATP synthase that produces ATP from ADP in the presence of a proton gradient across the membrane. The A chain is the catalytic subunit. The polypeptide is A-type ATP synthase subunit A (Thermococcus onnurineus (strain NA1)).